A 321-amino-acid polypeptide reads, in one-letter code: Aspartate carbamoyltransferase catalytic subunit (321 aa).

Positions 65 and 66 each coordinate carbamoyl phosphate. L-aspartate is bound at residue Lys93. 3 residues coordinate carbamoyl phosphate: Arg115, His143, and Gln146. 2 residues coordinate L-aspartate: Arg176 and Arg230. Gly271 and Pro272 together coordinate carbamoyl phosphate.

This sequence belongs to the aspartate/ornithine carbamoyltransferase superfamily. ATCase family. As to quaternary structure, heterododecamer (2C3:3R2) of six catalytic PyrB chains organized as two trimers (C3), and six regulatory PyrI chains organized as three dimers (R2).

It carries out the reaction carbamoyl phosphate + L-aspartate = N-carbamoyl-L-aspartate + phosphate + H(+). It functions in the pathway pyrimidine metabolism; UMP biosynthesis via de novo pathway; (S)-dihydroorotate from bicarbonate: step 2/3. Catalyzes the condensation of carbamoyl phosphate and aspartate to form carbamoyl aspartate and inorganic phosphate, the committed step in the de novo pyrimidine nucleotide biosynthesis pathway. The chain is Aspartate carbamoyltransferase catalytic subunit from Bartonella bacilliformis (strain ATCC 35685 / KC583 / Herrer 020/F12,63).